The chain runs to 881 residues: DNA mismatch repair protein MutS (881 aa).

An ATP-binding site is contributed by 632 to 639 (GPNMGGKS).

Belongs to the DNA mismatch repair MutS family.

This protein is involved in the repair of mismatches in DNA. It is possible that it carries out the mismatch recognition step. This protein has a weak ATPase activity. In Chelativorans sp. (strain BNC1), this protein is DNA mismatch repair protein MutS.